The following is a 207-amino-acid chain: Large ribosomal subunit protein uL3 (207 aa).

It belongs to the universal ribosomal protein uL3 family. As to quaternary structure, part of the 50S ribosomal subunit. Forms a cluster with proteins L14 and L19.

In terms of biological role, one of the primary rRNA binding proteins, it binds directly near the 3'-end of the 23S rRNA, where it nucleates assembly of the 50S subunit. This is Large ribosomal subunit protein uL3 from Desulforapulum autotrophicum (strain ATCC 43914 / DSM 3382 / VKM B-1955 / HRM2) (Desulfobacterium autotrophicum).